Reading from the N-terminus, the 650-residue chain is XK-related protein 4 (650 aa).

A compositionally biased stretch (basic and acidic residues) spans 1–15 (MAAKSDGRLKMKKSS). The interval 1 to 44 (MAAKSDGRLKMKKSSDVAFTPLQNSDHSGSVQGLAPGLPSGSGA) is disordered. Residues 21–31 (PLQNSDHSGSV) are compositionally biased toward polar residues. 2 helical membrane passes run 114-134 (WILA…WLAV) and 144-164 (WFGL…VFSF). Residue S200 is modified to Phosphoserine. The interval 200–238 (SAAGEGEARPSTPQRQASNASKSNIAAANSGSNSSGATR) is disordered. Low complexity predominate over residues 216 to 238 (ASNASKSNIAAANSGSNSSGATR). 8 consecutive transmembrane segments (helical) span residues 248-268 (CSFC…GQIW), 306-326 (HLLA…CIIV), 331-351 (LQAL…WALA), 365-385 (KPIS…TIAA), 396-418 (VFQL…WIVH), 428-448 (WEEI…WFNV), 457-477 (LFIY…LWYL), and 487-507 (FAIP…VFML).

Belongs to the XK family. Homodimer; homodimerization takes place upon caspase cleavage. Interacts with the processed C-terminus of XRCC4 (protein XRCC4, C-terminus); interaction promotes the phospholipid scramblase activity. Undergoes proteolytic processing by caspase-3 (CASP3), caspase-6 (CASP6) and caspase-7 (CASP7) to generate the XK-related protein 4, processed form, leading to its activation.

It is found in the cell membrane. The catalysed reaction is a 1,2-diacyl-sn-glycero-3-phospho-L-serine(in) = a 1,2-diacyl-sn-glycero-3-phospho-L-serine(out). Phospholipid scramblase activity is activated upon caspase cleavage to generate the XK-related protein 4, processed form. Does not act prior the onset of apoptosis. Its activity is regulated as follows. Homodimerizes upon caspase cleavage. Phospholipid scramblase activity is activated following interaction with the processed C-terminus of XRCC4 (protein XRCC4, C-terminus). Functionally, phospholipid scramblase that promotes phosphatidylserine exposure on apoptotic cell surface. Phosphatidylserine is a specific marker only present at the surface of apoptotic cells and acts as a specific signal for engulfment. The polypeptide is XK-related protein 4 (Homo sapiens (Human)).